A 222-amino-acid polypeptide reads, in one-letter code: Small ribosomal subunit protein uS3 (222 aa).

The 70-residue stretch at 39–108 (IRRHIKEKLY…TISLDIKEIK (70 aa)) folds into the KH type-2 domain.

The protein belongs to the universal ribosomal protein uS3 family. As to quaternary structure, part of the 30S ribosomal subunit. Forms a tight complex with proteins S10 and S14.

In terms of biological role, binds the lower part of the 30S subunit head. Binds mRNA in the 70S ribosome, positioning it for translation. The sequence is that of Small ribosomal subunit protein uS3 from Caldicellulosiruptor saccharolyticus (strain ATCC 43494 / DSM 8903 / Tp8T 6331).